We begin with the raw amino-acid sequence, 657 residues long: Serine/threonine kinase NLK (657 aa).

A Protein kinase domain is found at 208 to 554 (SQPDRPIGYG…VEEALSHPYL (347 aa)). ATP-binding positions include 214–222 (IGYGAFGVV) and Lys237. Asp391 serves as the catalytic Proton acceptor.

It belongs to the protein kinase superfamily. Ser/Thr protein kinase family. As to quaternary structure, component of the beta-catenin-lit-1 complex (also called the lit-1/wrm-1 complex or the wrm-1/lit-1 kinase complex) at least composed of lit-1 and wrm-1. Interacts with wrm-1 (via N-terminus); the interaction is direct and activates lit-1 kinase activity which leads to the phosphorylation of pop-1. This promotes pop-1 interaction with par-5 and translocation of pop-1 from the nucleus to the cytoplasm. Interacts with pop-1 (when phosphorylated on 'Ser-125'); the interaction is dependent on the beta-catenin-lit-1 complex. Mg(2+) serves as cofactor.

It is found in the cytoplasm. The protein resides in the cell cortex. Its subcellular location is the nucleus. The catalysed reaction is L-seryl-[protein] + ATP = O-phospho-L-seryl-[protein] + ADP + H(+). It catalyses the reaction L-threonyl-[protein] + ATP = O-phospho-L-threonyl-[protein] + ADP + H(+). Functionally, has a role in the Wnt signaling pathway controlling the asymmetry of cell divisions during embryogenesis. Operates in the AB and EMS cell lineages influencing cell specification. Required for body wall muscle development, endoderm development, pop-1 asymmetry and T-cell division asymmetry. Component of the beta-catenin-lit-1 complex which promotes the phosphorylation, down-regulation and subcellular relocation of pop-1. Regulates plp-1 nuclear localization in embryos. Plays a role in male tail tip morphogenesis. This Caenorhabditis briggsae protein is Serine/threonine kinase NLK.